A 157-amino-acid polypeptide reads, in one-letter code: Stalk-specific protein B (157 aa).

The N-terminal stretch at 1–19 (MRSILILLSLLLTIAFASA) is a signal peptide.

Its subcellular location is the secreted. The sequence is that of Stalk-specific protein B (staB) from Dictyostelium discoideum (Social amoeba).